A 1186-amino-acid chain; its full sequence is Myelin transcription factor 1-like protein (1186 aa).

Residues 1-21 form a disordered region; the sequence is MEVDTEEKRHRTRSKGVRVPV. The CCHHC-type 1 zinc finger occupies 22 to 65; the sequence is EPAIQELFSCPTPGCDGSGHVSGKYARHRSVYGCPLAKKRKTQD. Zn(2+) is bound by residues cysteine 31, cysteine 36, histidine 49, and cysteine 55. 2 disordered regions span residues 56–175 and 220–247; these read PLAK…QMNC and RTESEMNSNTSNSLEDDSDKNENLGRKS. The segment covering 86-169 has biased composition (acidic residues); the sequence is SVDECDDSDG…EEEEEEEENE (84 aa). The residue at position 250 (serine 250) is a Phosphoserine. 2 disordered regions span residues 342 to 372 and 449 to 513; these read SETNPQERNPQQNMNIRQHVRPEEDFPGRTP and REKM…GCDG. Residues 343–357 are compositionally biased toward polar residues; it reads ETNPQERNPQQNMNI. Basic and acidic residues-rich tracts occupy residues 361-372, 449-487, and 495-505; these read VRPEEDFPGRTP, REKMAMEAGRRDNMRSYEDQSPRQLPGEDRKPKSSDSHV, and DPSRTEKKESK. 2 CCHHC-type zinc fingers span residues 497-540 and 541-584; these read SRTE…PPEI and LAMH…KLAK. Positions 506, 511, 524, 530, 550, 555, 568, and 574 each coordinate Zn(2+). Disordered regions lie at residues 659-709 and 753-780; these read RAIA…GGGS and KPQDLCATRNPDMEVDENGTLDLSMNKQ. The segment covering 666 to 683 has biased composition (basic and acidic residues); it reads QTRDISPKGYDDAKRYCK. The span at 685–709 shows a compositional bias: low complexity; the sequence is PSPSSSSTSSYAPSSSSNLSCGGGS. 3 consecutive CCHHC-type zinc fingers follow at residues 896–939, 945–988, and 998–1041; these read LATS…GIRI, DKED…QKDG, and KSVK…MKKA. Cysteine 905, cysteine 910, histidine 923, cysteine 929, cysteine 954, cysteine 959, histidine 972, cysteine 978, cysteine 1007, cysteine 1012, histidine 1025, and cysteine 1031 together coordinate Zn(2+). Positions 1056-1130 form a coiled coil; the sequence is SNGIENDEEI…LANLSQSLIH (75 aa).

This sequence belongs to the MYT1 family. Interacts with SIN3B.

The protein resides in the nucleus. It is found in the chromosome. Functionally, transcription factor that plays a key role in neuronal differentiation by specifically repressing expression of non-neuronal genes during neuron differentiation. In contrast to other transcription repressors that inhibit specific lineages, mediates repression of multiple differentiation programs. Also represses expression of negative regulators of neurogenesis, such as members of the Notch signaling pathway, including HES1. The combination of three transcription factors, ASCL1, POU3F2/BRN2 and MYT1L, is sufficient to reprogram fibroblasts and other somatic cells into induced neuronal (iN) cells in vitro. Directly binds the 5'-AAGTT-3' core motif present on the promoter of target genes and represses transcription by recruiting a multiprotein complex containing SIN3B. The 5'-AAGTT-3' core motif is absent from the promoter of neural genes. This Homo sapiens (Human) protein is Myelin transcription factor 1-like protein.